Reading from the N-terminus, the 603-residue chain is Aquaporin-2 (603 aa).

Residues 40 to 70 form a helical membrane-spanning segment; it reads SLKKYKYNLFFEFIGSFLFVFFISIYMLNSN. Composition is skewed to basic and acidic residues over residues 135-149 and 156-190; these read NNKS…DDKI and EFEK…EDPK. Residues 135–200 form a disordered region; that stretch reads NNKSKREVER…NISNKNENYD (66 aa). A compositionally biased stretch (polar residues) spans 191-200; the sequence is NISNKNENYD. The next 5 helical transmembrane spans lie at 282–299, 321–346, 360–393, 442–471, and 509–542; these read HAIY…FILL, FALS…AHLY, IIKT…EENK, NKYI…VTNT, and ITKI…FLSL.

The protein belongs to the MIP/aquaporin (TC 1.A.8) family.

Its subcellular location is the endomembrane system. The catalysed reaction is H2O(in) = H2O(out). It carries out the reaction glycerol(in) = glycerol(out). In terms of biological role, required for sporozoite development in the mosquito vector. This Plasmodium falciparum (isolate NF54) protein is Aquaporin-2.